Here is a 158-residue protein sequence, read N- to C-terminus: Protein ORF4 (158 aa).

In terms of biological role, acts by interacting with multiple viral and host proteins to enhance the activity of viral RNA-dependent RNA polymerase. In Hepatitis E virus genotype 1 (isolate Human/Pakistan/Sar-55) (HEV-1), this protein is Protein ORF4.